A 350-amino-acid chain; its full sequence is Transmembrane protein 185A (350 aa).

7 consecutive transmembrane segments (helical) span residues 16–36, 41–61, 81–101, 111–131, 177–197, 211–231, and 240–260; these read LIYA…DGII, WAVF…ASVG, FKAM…EVLV, FWLL…AACV, ILMS…VLFL, ITMA…EILL, and AFSC…LMAT. The interval 298 to 350 is mediates interaction with MAP1B; the sequence is DLHHEDNEETEETPVPEPPKIAPMFRKKARVVITQSPGKYVLPPPKLNIEMPD.

Belongs to the TMEM185 family. In terms of assembly, interacts with MAP1B.

It is found in the cell projection. The protein resides in the dendrite. The protein localises to the membrane. The protein is Transmembrane protein 185A (TMEM185A) of Homo sapiens (Human).